A 95-amino-acid chain; its full sequence is Large ribosomal subunit protein bL27 (95 aa).

The segment at 1–21 is disordered; it reads MAHKKGASSSRNGRDSNAQRL. The span at 7 to 19 shows a compositional bias: polar residues; it reads ASSSRNGRDSNAQ.

The protein belongs to the bacterial ribosomal protein bL27 family.

This is Large ribosomal subunit protein bL27 from Parafrankia sp. (strain EAN1pec).